The sequence spans 473 residues: Photosystem II CP43 reaction center protein (473 aa).

Residues 1-14 constitute a propeptide that is removed on maturation; that stretch reads MKILYSLRRYFHVE. Thr15 is subject to N-acetylthreonine. Thr15 bears the Phosphothreonine mark. Helical transmembrane passes span 69–93, 134–155, 178–200, 255–275, and 291–312; these read LFEVAHFVPEKPMYEQGLILLPHLA, LIGPETLEESFPFFGYVWKDKN, KAIWFGGLYDTWAPGGGDVRKIT, KPFAWARRAFVWSGEAYLSYS, and WFNNTAYPSEFYGPTGPEASQA. Residue Glu367 participates in [CaMn4O5] cluster binding. Residues 447–471 traverse the membrane as a helical segment; the sequence is RARAAAAGFEKGIDRDSEPVLYMEP.

This sequence belongs to the PsbB/PsbC family. PsbC subfamily. PSII is composed of 1 copy each of membrane proteins PsbA, PsbB, PsbC, PsbD, PsbE, PsbF, PsbH, PsbI, PsbJ, PsbK, PsbL, PsbM, PsbT, PsbX, PsbY, PsbZ, Psb30/Ycf12, at least 3 peripheral proteins of the oxygen-evolving complex and a large number of cofactors. It forms dimeric complexes. Binds multiple chlorophylls and provides some of the ligands for the Ca-4Mn-5O cluster of the oxygen-evolving complex. It may also provide a ligand for a Cl- that is required for oxygen evolution. PSII binds additional chlorophylls, carotenoids and specific lipids. is required as a cofactor.

The protein localises to the plastid. The protein resides in the chloroplast thylakoid membrane. One of the components of the core complex of photosystem II (PSII). It binds chlorophyll and helps catalyze the primary light-induced photochemical processes of PSII. PSII is a light-driven water:plastoquinone oxidoreductase, using light energy to abstract electrons from H(2)O, generating O(2) and a proton gradient subsequently used for ATP formation. This Chara vulgaris (Common stonewort) protein is Photosystem II CP43 reaction center protein.